Reading from the N-terminus, the 372-residue chain is tRNA-specific 2-thiouridylase MnmA (372 aa).

ATP-binding positions include 13-20 and Met-39; that span reads GMSGGVDS. Positions 99–101 are interaction with target base in tRNA; it reads NPD. The active-site Nucleophile is the Cys-104. An intrachain disulfide couples Cys-104 to Cys-200. Residue Gly-128 coordinates ATP. The interaction with tRNA stretch occupies residues 150–152; the sequence is KDQ. Catalysis depends on Cys-200, which acts as the Cysteine persulfide intermediate. The interaction with tRNA stretch occupies residues 310 to 311; it reads RY.

The protein belongs to the MnmA/TRMU family.

It localises to the cytoplasm. It catalyses the reaction S-sulfanyl-L-cysteinyl-[protein] + uridine(34) in tRNA + AH2 + ATP = 2-thiouridine(34) in tRNA + L-cysteinyl-[protein] + A + AMP + diphosphate + H(+). Its function is as follows. Catalyzes the 2-thiolation of uridine at the wobble position (U34) of tRNA, leading to the formation of s(2)U34. The sequence is that of tRNA-specific 2-thiouridylase MnmA from Bacillus licheniformis (strain ATCC 14580 / DSM 13 / JCM 2505 / CCUG 7422 / NBRC 12200 / NCIMB 9375 / NCTC 10341 / NRRL NRS-1264 / Gibson 46).